Consider the following 305-residue polypeptide: tRNA dimethylallyltransferase (305 aa).

8–15 contributes to the ATP binding site; it reads GPTAVGKT. 10 to 15 contacts substrate; sequence TAVGKT. Positions 33-36 are interaction with substrate tRNA; the sequence is DSRQ.

Belongs to the IPP transferase family. As to quaternary structure, monomer. Mg(2+) serves as cofactor.

The enzyme catalyses adenosine(37) in tRNA + dimethylallyl diphosphate = N(6)-dimethylallyladenosine(37) in tRNA + diphosphate. Its function is as follows. Catalyzes the transfer of a dimethylallyl group onto the adenine at position 37 in tRNAs that read codons beginning with uridine, leading to the formation of N6-(dimethylallyl)adenosine (i(6)A). The sequence is that of tRNA dimethylallyltransferase from Thermotoga petrophila (strain ATCC BAA-488 / DSM 13995 / JCM 10881 / RKU-1).